The following is a 277-amino-acid chain: Carbonyl reductase [NADPH] 3 (277 aa).

Residue serine 2 is modified to N-acetylserine. NADP(+)-binding positions include 10-34, 38-42, 63-64, and asparagine 90; these read VTGA…GDVV, RDVAR, and DI. Serine 30 carries the post-translational modification Phosphoserine. Serine 140 is a binding site for substrate. The active-site Proton acceptor is the tyrosine 194. Residues 194–198 and aspartate 239 each bind NADP(+); that span reads YGVSK.

Belongs to the short-chain dehydrogenases/reductases (SDR) family. As to expression, detected in ovary, pancreas, intestine, colon, kidney, brain, thymus, lung, heart, liver, spleen, leukocyte, prostate and testis.

Its subcellular location is the cytoplasm. The catalysed reaction is a secondary alcohol + NADP(+) = a ketone + NADPH + H(+). It catalyses the reaction a quinone + NADPH + H(+) = a quinol + NADP(+). Functionally, catalyzes the NADPH-dependent reduction of carbonyl compounds to their corresponding alcohols. Has low NADPH-dependent oxidoreductase activity. Acts on several orthoquinones, acts as well on non-quinone compounds, such as isatin or on the anticancer drug oracin. Best substrates for CBR3 is 1,2- naphthoquinone, hence could play a role in protection against cytotoxicity of exogenous quinones. Exerts activity toward ortho-quinones but not paraquinones. No endogenous substrate for CBR3 except isatin has been identified. This chain is Carbonyl reductase [NADPH] 3, found in Homo sapiens (Human).